Here is a 150-residue protein sequence, read N- to C-terminus: Cell division protein SepF (150 aa).

Belongs to the SepF family. In terms of assembly, homodimer. Interacts with FtsZ.

The protein localises to the cytoplasm. Its function is as follows. Cell division protein that is part of the divisome complex and is recruited early to the Z-ring. Probably stimulates Z-ring formation, perhaps through the cross-linking of FtsZ protofilaments. Its function overlaps with FtsA. The chain is Cell division protein SepF from Clostridium kluyveri (strain NBRC 12016).